Consider the following 571-residue polypeptide: MDTKKEIKNNNFICQIINKDLNENKNLSFYTRFPPEPNGYLHIGHAKSICLNFELASLYKGRCNLRFDDTNPLKENIKYIKSIKHDINWLGYKWHGNVRYASEYFLKLYQYAQELIKKGLAYVDHLTKEQIREYRGTLNTPGKNSPYRNRTIQENIELFEKMKKGDFSEGEACLRAKINMSSSSIIMRDPVLYRIIFIKHHQTQNKWCIYPMYDFAHCLSDSIEGITHSLCTLEFQDNKFLYNWILKNTSVKHYPKQYEFSRLNLEFSILSKRKIKILIDKNIIEGWDDPRIPTLSALRRKGYTPSSIKNFCQKIGVTKQNNLIEFSMLEHCIRKELNQTAIRTMAILDPIKIFLYNLDSNYKEEFIVPNHPNNPEMGTHKIIFTNTIYIDRSDFKEKYDKKYKRLKLGEKIRLRYSYIIHAEKIEKDEYGNISNIICYCDLNTLGRKPKDNKNPAVIHWISEKNTLSAEFKLYDQLFNIKNPEQQENFLLYINSKSLIKKFGFIEKKIGEEIQKKISNNNIEIFFQFERIGYFCIDFIDSKKNQLVFNRTVGLRDTWDSKKIKTKNITNN.

The 'HIGH' region motif lies at 35–45 (PEPNGYLHIGH). ATP contacts are provided by residues 36–38 (EPN) and 42–48 (HIGHAKS). The L-glutamine site is built by D68 and Y213. Residues T232, 262-263 (RL), and 270-272 (LSK) each bind ATP. Residues 269–273 (ILSKR) carry the 'KMSKS' region motif.

It belongs to the class-I aminoacyl-tRNA synthetase family. Monomer.

It is found in the cytoplasm. The catalysed reaction is tRNA(Gln) + L-glutamine + ATP = L-glutaminyl-tRNA(Gln) + AMP + diphosphate. This chain is Glutamine--tRNA ligase, found in Buchnera aphidicola subsp. Acyrthosiphon pisum (strain Tuc7).